Here is a 96-residue protein sequence, read N- to C-terminus: MAKGQSLQDPYLNALRRERIPVSIYLVNGIKLQGQIESFDQFVILLKNTVNQMVYKHAISTVVPARSVSHHNSVQHHHIVQTQEMQVEALAENQTE.

The 60-residue stretch at 9 to 68 folds into the Sm domain; it reads DPYLNALRRERIPVSIYLVNGIKLQGQIESFDQFVILLKNTVNQMVYKHAISTVVPARSV.

It belongs to the Hfq family. In terms of assembly, homohexamer.

Its function is as follows. RNA chaperone that binds small regulatory RNA (sRNAs) and mRNAs to facilitate mRNA translational regulation in response to envelope stress, environmental stress and changes in metabolite concentrations. Also binds with high specificity to tRNAs. The chain is RNA-binding protein Hfq from Histophilus somni (strain 129Pt) (Haemophilus somnus).